Here is a 157-residue protein sequence, read N- to C-terminus: Ribosomal RNA large subunit methyltransferase H (157 aa).

S-adenosyl-L-methionine is bound by residues Leu-73, Gly-104, and Leu-123–Leu-128.

Belongs to the RNA methyltransferase RlmH family. In terms of assembly, homodimer.

It localises to the cytoplasm. It carries out the reaction pseudouridine(1915) in 23S rRNA + S-adenosyl-L-methionine = N(3)-methylpseudouridine(1915) in 23S rRNA + S-adenosyl-L-homocysteine + H(+). Functionally, specifically methylates the pseudouridine at position 1915 (m3Psi1915) in 23S rRNA. The polypeptide is Ribosomal RNA large subunit methyltransferase H (Xylella fastidiosa (strain M23)).